Reading from the N-terminus, the 88-residue chain is Protein GOLVEN 10 (88 aa).

An N-terminal signal peptide occupies residues 1 to 22 (MSSIHVASMILLLFLFLHHSDS). The propeptide occupies 23–75 (RHLDNVHITASRFSLVKDQNVVSSSTSKEPVKVSRFVPGPLKHHHRRPPLLFA). The segment at 44-88 (VSSSTSKEPVKVSRFVPGPLKHHHRRPPLLFADYPKPSTRPPRHN) is disordered. A Sulfotyrosine modification is found at Tyr77. Pro85 carries the hydroxyproline modification.

The protein belongs to the RGF family. As to quaternary structure, binds to LRR receptor-like serine/threonine-protein kinases RGI1, RGI2 and RGI3 to trigger their dimerization with SERK proteins and subsequent signaling. In terms of tissue distribution, expressed in roots, shoots, leaves and flowers.

It is found in the secreted. It localises to the endoplasmic reticulum. Its function is as follows. Signaling peptide (root growth factor) that maintains the postembryonic root stem cell niche. Regulates the pattern of root growth and lateral root development by modulating the length and the number of cortical cells in the root apical meristem (RAM), and the anticlinal asymmetric cell divisions in lateral root initiation cells. The protein is Protein GOLVEN 10 of Arabidopsis thaliana (Mouse-ear cress).